A 532-amino-acid polypeptide reads, in one-letter code: 56 kDa type-specific antigen (532 aa).

An N-terminal signal peptide occupies residues 1-22; the sequence is MKKIMLIASAMSALSLPFSASA. A helical transmembrane segment spans residues 67-87; the sequence is LTTGLPFGGTLAAGMTIAPGF. Disordered stretches follow at residues 113 to 140 and 400 to 426; these read KGEIKADSGGGTDAPIRKPFKLTPPQPT and QQEEDAKNQGKGDCKQQQGASEKSKEG. Basic and acidic residues predominate over residues 403 to 413; it reads EDAKNQGKGDC. The chain crosses the membrane as a helical span at residues 480 to 500; sequence TGMVASGALGVAINAAEGVCV.

It localises to the cell membrane. Its function is as follows. May be an adherent factor for rickettsial adsorption to the host-cell surface and a determinant of virulence of individual rickettsial strain. It is the major outer membrane protein. The polypeptide is 56 kDa type-specific antigen (Orientia tsutsugamushi (Rickettsia tsutsugamushi)).